The following is a 428-amino-acid chain: CinA-like protein (428 aa).

The protein belongs to the CinA family.

The polypeptide is CinA-like protein (Endomicrobium trichonymphae).